The following is a 228-amino-acid chain: Ribonuclease 3 (228 aa).

An RNase III domain is found at 2–130 (LTYLEQKINY…LLAAVYLDGG (129 aa)). Glutamate 43 lines the Mg(2+) pocket. The active site involves aspartate 47. Aspartate 116 and glutamate 119 together coordinate Mg(2+). Glutamate 119 is a catalytic residue. Residues 157–226 (DYKTRLQEVV…AMEALSKLGI (70 aa)) enclose the DRBM domain.

This sequence belongs to the ribonuclease III family. In terms of assembly, homodimer. Mg(2+) is required as a cofactor.

It localises to the cytoplasm. The enzyme catalyses Endonucleolytic cleavage to 5'-phosphomonoester.. Its function is as follows. Digests double-stranded RNA. Involved in the processing of primary rRNA transcript to yield the immediate precursors to the large and small rRNAs (23S and 16S). Processes some mRNAs, and tRNAs when they are encoded in the rRNA operon. Processes pre-crRNA and tracrRNA of type II CRISPR loci if present in the organism. This chain is Ribonuclease 3, found in Caldanaerobacter subterraneus subsp. tengcongensis (strain DSM 15242 / JCM 11007 / NBRC 100824 / MB4) (Thermoanaerobacter tengcongensis).